The chain runs to 320 residues: D-alanine--D-alanine ligase (320 aa).

The ATP-grasp domain occupies 104–308 (KRVCLSHGVP…YEDLCVEILR (205 aa)). An ATP-binding site is contributed by 134–189 (AAEFGMPLMLKAPHEGSTIGIAKVETAEGMQAGFDLCAKYDDVVLVEQFVKGRELT). 3 residues coordinate Mg(2+): aspartate 261, glutamate 275, and asparagine 277.

This sequence belongs to the D-alanine--D-alanine ligase family. It depends on Mg(2+) as a cofactor. Requires Mn(2+) as cofactor.

Its subcellular location is the cytoplasm. It carries out the reaction 2 D-alanine + ATP = D-alanyl-D-alanine + ADP + phosphate + H(+). Its pathway is cell wall biogenesis; peptidoglycan biosynthesis. Cell wall formation. In Janthinobacterium sp. (strain Marseille) (Minibacterium massiliensis), this protein is D-alanine--D-alanine ligase.